Here is a 73-residue protein sequence, read N- to C-terminus: RNA-binding protein Hfq (73 aa).

The Sm domain maps to 8–68; the sequence is DQFLNQIRKE…ISTFAPQKNV (61 aa).

The protein belongs to the Hfq family. Homohexamer.

Its function is as follows. RNA chaperone that binds small regulatory RNA (sRNAs) and mRNAs to facilitate mRNA translational regulation in response to envelope stress, environmental stress and changes in metabolite concentrations. Also binds with high specificity to tRNAs. The protein is RNA-binding protein Hfq of Bacillus licheniformis (strain ATCC 14580 / DSM 13 / JCM 2505 / CCUG 7422 / NBRC 12200 / NCIMB 9375 / NCTC 10341 / NRRL NRS-1264 / Gibson 46).